The following is a 444-amino-acid chain: Xaa-Pro dipeptidase (444 aa).

Mn(2+)-binding residues include Asp247, Asp258, His340, Glu385, and Glu424.

This sequence belongs to the peptidase M24B family. Bacterial-type prolidase subfamily. Mn(2+) is required as a cofactor.

The enzyme catalyses Xaa-L-Pro dipeptide + H2O = an L-alpha-amino acid + L-proline. Splits dipeptides with a prolyl residue in the C-terminal position. This chain is Xaa-Pro dipeptidase, found in Photorhabdus laumondii subsp. laumondii (strain DSM 15139 / CIP 105565 / TT01) (Photorhabdus luminescens subsp. laumondii).